The chain runs to 156 residues: Cyclic pyranopterin monophosphate synthase (156 aa).

Substrate-binding positions include 73–75 and 110–111; these read LCH and ME. D125 is an active-site residue.

This sequence belongs to the MoaC family. In terms of assembly, homohexamer; trimer of dimers.

The catalysed reaction is (8S)-3',8-cyclo-7,8-dihydroguanosine 5'-triphosphate = cyclic pyranopterin phosphate + diphosphate. It functions in the pathway cofactor biosynthesis; molybdopterin biosynthesis. Functionally, catalyzes the conversion of (8S)-3',8-cyclo-7,8-dihydroguanosine 5'-triphosphate to cyclic pyranopterin monophosphate (cPMP). In Stutzerimonas stutzeri (strain A1501) (Pseudomonas stutzeri), this protein is Cyclic pyranopterin monophosphate synthase.